Here is a 171-residue protein sequence, read N- to C-terminus: Voltage-dependent P/Q-type calcium channel subunit alpha-1A (171 aa).

A helical membrane pass occupies residues 1–11; sequence FVTVLGSITDI. Residues 1-171 form an IV repeat; it reads FVTVLGSITD…LMLNLFVAVI (171 aa). Residues 12-18 lie on the Extracellular side of the membrane; it reads LVTEFGN. Residues 19–37 form a helical membrane-spanning segment; sequence NFINLSFLRLFRAARLIKL. The Cytoplasmic segment spans residues 38–56; sequence LRQGYTIRILLWTFVQSFK. Residues 57 to 76 traverse the membrane as a helical segment; sequence ALPYVCLLIAMLFFIYAIIG. Residues 77-143 lie on the Extracellular side of the membrane; it reads MQVFGNIGIE…ENSGIKEDEC (67 aa). A helical transmembrane segment spans residues 144–168; it reads GNEFAYFYFVSFIFLCSFLMLNLFV. At 169 to 171 the chain is on the cytoplasmic side; it reads AVI.

This sequence belongs to the calcium channel alpha-1 subunit (TC 1.A.1.11) family. CACNA1A subfamily. As to quaternary structure, voltage-dependent calcium channels are multisubunit complexes, consisting of alpha-1, alpha-2, beta and delta subunits in a 1:1:1:1 ratio. The channel activity is directed by the pore-forming and voltage-sensitive alpha-1 subunit. In many cases, this subunit is sufficient to generate voltage-sensitive calcium channel activity. The auxiliary subunits beta and alpha-2/delta linked by a disulfide bridge regulate the channel activity.

The protein localises to the cell membrane. The enzyme catalyses Ca(2+)(in) = Ca(2+)(out). Functionally, the isoform alpha-1A gives rise to P and/or Q-type calcium currents. P/Q-type calcium channels belong to the 'high-voltage activated' (HVA) group. The chain is Voltage-dependent P/Q-type calcium channel subunit alpha-1A (CACNA1A) from Gallus gallus (Chicken).